Consider the following 473-residue polypeptide: tRNA modification GTPase MnmE (473 aa).

Arg-31, Glu-95, and Arg-134 together coordinate (6S)-5-formyl-5,6,7,8-tetrahydrofolate. A TrmE-type G domain is found at 230–394 (GVSTVIAGKP…LKQHMGDLVK (165 aa)). GTP is bound by residues 240–245 (NAGKST), 259–265 (SHMPGTT), and 284–287 (DTAG). Mg(2+) is bound by residues Ser-244 and Thr-265. Residue Lys-473 participates in (6S)-5-formyl-5,6,7,8-tetrahydrofolate binding.

Belongs to the TRAFAC class TrmE-Era-EngA-EngB-Septin-like GTPase superfamily. TrmE GTPase family. Homodimer. Heterotetramer of two MnmE and two MnmG subunits. It depends on K(+) as a cofactor.

It is found in the cytoplasm. In terms of biological role, exhibits a very high intrinsic GTPase hydrolysis rate. Involved in the addition of a carboxymethylaminomethyl (cmnm) group at the wobble position (U34) of certain tRNAs, forming tRNA-cmnm(5)s(2)U34. In Chlorobaculum tepidum (strain ATCC 49652 / DSM 12025 / NBRC 103806 / TLS) (Chlorobium tepidum), this protein is tRNA modification GTPase MnmE.